The following is a 258-amino-acid chain: Phosphoadenosine 5'-phosphosulfate reductase (258 aa).

Cys-244 acts as the Nucleophile; cysteine thiosulfonate intermediate in catalysis.

The protein belongs to the PAPS reductase family. CysH subfamily.

It is found in the cytoplasm. It carries out the reaction [thioredoxin]-disulfide + sulfite + adenosine 3',5'-bisphosphate + 2 H(+) = [thioredoxin]-dithiol + 3'-phosphoadenylyl sulfate. It functions in the pathway sulfur metabolism; hydrogen sulfide biosynthesis; sulfite from sulfate: step 3/3. Functionally, catalyzes the formation of sulfite from phosphoadenosine 5'-phosphosulfate (PAPS) using thioredoxin as an electron donor. This chain is Phosphoadenosine 5'-phosphosulfate reductase, found in Vibrio atlanticus (strain LGP32) (Vibrio splendidus (strain Mel32)).